Consider the following 514-residue polypeptide: Flagellin B (514 aa).

Belongs to the bacterial flagellin family. Heteromer of FlaA and FlaB. FlaB is located proximal to the hook while the remainder of the filament is composed of the predominant FlaA.

It is found in the secreted. Its subcellular location is the bacterial flagellum. In terms of biological role, flagellin is the subunit protein which polymerizes to form the filaments of bacterial flagella. Important for motility and virulence. The protein is Flagellin B (flaB) of Helicobacter pylori (strain J99 / ATCC 700824) (Campylobacter pylori J99).